Here is a 37-residue protein sequence, read N- to C-terminus: Esculentin-2JDa (37 aa).

An intrachain disulfide couples Cys-31 to Cys-37.

In terms of tissue distribution, expressed by the skin glands.

It is found in the secreted. Functionally, has antibacterial activity against E.coli and S.aureus strains. The chain is Esculentin-2JDa from Odorrana jingdongensis (Jingdong frog).